The primary structure comprises 891 residues: MNKHHPKLRSFYSIRKSTLGVASVIVSTLFLITSQHQAQAAENTNTSDKISENQNNNATTTQQPKDTNQTQPATQPVITAKNYPAADESLKDAIKDPALENKEHDIGPREQVNFQLLDKNNETQYYHFFSIKDPADVYYTKKKAEVELDINTASTWKKFEVYENNQKLPVRLVSYSPVPEDHAYIRFPVSDGTQELKIVSSTQIDDGEETNYDYTKLVFAKPIYNDPSLVKSDTNDAVVTNDQSSSDASNQTNTNTSNQNTSTTNNANNQPQATTNMSQPAQPKSSANADQASSQPAHETNSNGNTNDKTNESSNQSDVNQQYPPADESLQDAIKNPAIIDKEHTADNWRPIDFQMKNDKGERQFYHYASTVEPATVIFTKTGPVIELGLKTASTWKKFEVYEGDKKLPVELVSYDSDKDYAYIRFPVSNGTRDVKIVSSIEYGENIHEDYDYTLMVFAQPITNNPDDYVDEETYNLQKLLAPYHKAKTLERQVYELEKLQEKLPEKYKAEYKKKLDQTRVELADQVKSAVTEFENVTPTNDQLTDLQEAHFVVFESEENSESVMDGFVEHPFYTATLNGQKYVVMKTKDDSYWKDLIVEGKRVTTVSKDPKNNSRTLIFPYIPDKAVYNAIVKVVVANIGYEGQYHVRIINQDINTKDDDTSQNNTSEPLNVQTGQEGKVADTDVAENSSTATNPKDASDKADVIEPESDVVKDADNNIDKDVQHDVDHLSDMSDNNHFDKYDLKEMDTQIAKDTDRNVDNSVGMSSNVDTDKDSNKNKDKVIQLAHIADKNNHTGKAAKLDVVKQNYNNTDKVTDKKTTEHLPSDIHKTVDKTVKTKEKAGTPSKENKLSQSKMLPKTGETTSSQSWWGLYALLGMLALFIPKFRKESK.

The signal sequence occupies residues 1–40; the sequence is MNKHHPKLRSFYSIRKSTLGVASVIVSTLFLITSQHQAQA. Residues 42 to 77 are disordered; it reads ENTNTSDKISENQNNNATTTQQPKDTNQTQPATQPV. Over residues 53 to 63 the composition is skewed to low complexity; sequence NQNNNATTTQQ. Residues 64-77 show a composition bias toward polar residues; it reads PKDTNQTQPATQPV. The NEAT 1 domain occupies 105 to 232; sequence DIGPREQVNF…IYNDPSLVKS (128 aa). Positions 239–324 are disordered; sequence VTNDQSSSDA…NQSDVNQQYP (86 aa). Low complexity predominate over residues 240-276; the sequence is TNDQSSSDASNQTNTNTSNQNTSTTNNANNQPQATTN. The segment covering 277–323 has biased composition (polar residues); it reads MSQPAQPKSSANADQASSQPAHETNSNGNTNDKTNESSNQSDVNQQY. 2 consecutive NEAT domains span residues 345-471 and 543-660; these read TADN…DYVD and QLTD…TKDD. Disordered regions lie at residues 657–718, 752–777, and 835–864; these read TKDD…DADN, IAKDTDRNVDNSVGMSSNVDTDKDSN, and TVKTKEKAGTPSKENKLSQSKMLPKTGETT. Composition is skewed to polar residues over residues 663-677 and 687-697; these read SQNNTSEPLNVQTGQ and AENSSTATNPK. The segment covering 698–718 has biased composition (basic and acidic residues); sequence DASDKADVIEPESDVVKDADN. Over residues 835 to 850 the composition is skewed to basic and acidic residues; sequence TVKTKEKAGTPSKENK. The segment covering 851–864 has biased composition (polar residues); it reads LSQSKMLPKTGETT. Residues 857–861 carry the LPXTG sorting signal motif; sequence LPKTG. Position 860 is a pentaglycyl murein peptidoglycan amidated threonine (Thr-860). A propeptide spans 861–891 (removed by sortase); it reads GETTSSQSWWGLYALLGMLALFIPKFRKESK.

The protein belongs to the IsdH family.

The protein resides in the secreted. It localises to the cell wall. Functionally, binds human plasma haptoglobin-hemoglobin complexes, haptoglobin and hemoglobin. Binds haptoglobin-hemoglobin complexes with significantly higher affinity than haptoglobin alone. This chain is Iron-regulated surface determinant protein H (isdH), found in Staphylococcus aureus (strain Mu50 / ATCC 700699).